The sequence spans 1436 residues: DNA-directed RNA polymerase subunit beta (1436 aa).

The protein belongs to the RNA polymerase beta chain family. The RNAP catalytic core consists of 2 alpha, 1 beta, 1 beta' and 1 omega subunit. When a sigma factor is associated with the core the holoenzyme is formed, which can initiate transcription.

The catalysed reaction is RNA(n) + a ribonucleoside 5'-triphosphate = RNA(n+1) + diphosphate. DNA-dependent RNA polymerase catalyzes the transcription of DNA into RNA using the four ribonucleoside triphosphates as substrates. This Wolbachia pipientis protein is DNA-directed RNA polymerase subunit beta.